The chain runs to 891 residues: von Willebrand factor A domain-containing protein 7 (891 aa).

The first 28 residues, 1–28 (MLPTEVPQSHPGPSALLLLQLLLPPTSA), serve as a signal peptide directing secretion. A glycan (N-linked (GlcNAc...) asparagine) is linked at N55. Residues 237–272 (PKPPGKCSHGGHFDRSSSQPPRGGINKDSTSPGFSP) form a disordered region. Positions 313–506 (ASSLSFVLDT…SMAALVTLPL (194 aa)) constitute a VWFA domain.

In terms of tissue distribution, expressed at low level in different cell lines.

The protein localises to the secreted. The sequence is that of von Willebrand factor A domain-containing protein 7 (VWA7) from Homo sapiens (Human).